Reading from the N-terminus, the 197-residue chain is Shikimate kinase (197 aa).

14 to 19 is an ATP binding site; that stretch reads GSGKST. Residue serine 18 participates in Mg(2+) binding. Residues aspartate 36, arginine 60, and glycine 82 each contribute to the substrate site. Arginine 120 serves as a coordination point for ATP. Substrate is bound at residue arginine 147.

This sequence belongs to the shikimate kinase family. As to quaternary structure, monomer. It depends on Mg(2+) as a cofactor.

The protein localises to the cytoplasm. It carries out the reaction shikimate + ATP = 3-phosphoshikimate + ADP + H(+). Its pathway is metabolic intermediate biosynthesis; chorismate biosynthesis; chorismate from D-erythrose 4-phosphate and phosphoenolpyruvate: step 5/7. Its function is as follows. Catalyzes the specific phosphorylation of the 3-hydroxyl group of shikimic acid using ATP as a cosubstrate. The sequence is that of Shikimate kinase from Prosthecochloris aestuarii (strain DSM 271 / SK 413).